We begin with the raw amino-acid sequence, 193 residues long: AP-3 complex subunit sigma-2 (193 aa).

The protein belongs to the adaptor complexes small subunit family. In terms of assembly, adaptor protein complex 3 (AP-3) is a heterotetramer composed of two large adaptins (delta-type subunit AP3D1 and beta-type subunit AP3B1 or AP3B2), a medium adaptin (mu-type subunit AP3M1 or AP3M2) and a small adaptin (sigma-type subunit APS1 or AP3S2). Interacts with AGAP1. AP-3 associates with the BLOC-1 complex. As to expression, present in all adult tissues examined.

It is found in the golgi apparatus. The protein resides in the cytoplasmic vesicle membrane. Functionally, part of the AP-3 complex, an adaptor-related complex which is not clathrin-associated. The complex is associated with the Golgi region as well as more peripheral structures. It facilitates the budding of vesicles from the Golgi membrane and may be directly involved in trafficking to lysosomes. In concert with the BLOC-1 complex, AP-3 is required to target cargos into vesicles assembled at cell bodies for delivery into neurites and nerve terminals. This Homo sapiens (Human) protein is AP-3 complex subunit sigma-2 (AP3S2).